The primary structure comprises 488 residues: Tyrosine-protein kinase Srms (488 aa).

One can recognise an SH3 domain in the interval 51 to 112 (PFPQLFLALY…PITHVAKASP (62 aa)). Residues 120–212 (WYFSGVSRTQ…LIQNPLLQPC (93 aa)) enclose the SH2 domain. One can recognise a Protein kinase domain in the interval 230–488 (FALGRKLGEG…KLHAIHRCHP (259 aa)). ATP is bound by residues 236 to 244 (LGEGYFGEV) and Lys258. Asp350 acts as the Proton acceptor in catalysis. Tyr380 is subject to Phosphotyrosine; by autocatalysis.

The protein belongs to the protein kinase superfamily. Tyr protein kinase family. SRC subfamily. As to quaternary structure, interacts (via the SH2 and SH3 domains) with DOK1. Interacts with KHDRBS1/SAM68 and VIM. As to expression, highly expressed in most breast cancers (at protein level).

The protein localises to the cytoplasm. The catalysed reaction is L-tyrosyl-[protein] + ATP = O-phospho-L-tyrosyl-[protein] + ADP + H(+). In terms of biological role, non-receptor tyrosine-protein kinase which phosphorylates DOK1 on tyrosine residues. Also phosphorylates KHDRBS1/SAM68 and VIM on tyrosine residues. Phosphorylation of KHDRBS1 is EGF-dependent. Phosphorylates OTUB1, promoting deubiquitination of RPTOR. This Homo sapiens (Human) protein is Tyrosine-protein kinase Srms (SRMS).